We begin with the raw amino-acid sequence, 141 residues long: Nucleoside triphosphatase NudI (141 aa).

One can recognise a Nudix hydrolase domain in the interval 1-141 (MRQRTIVCPL…RKTLSLKGLL (141 aa)). The Nudix box motif lies at 38–59 (GGVEPGERIEDALRREIREELG).

This sequence belongs to the Nudix hydrolase family. NudI subfamily. In terms of assembly, monomer. Mg(2+) serves as cofactor.

It catalyses the reaction a ribonucleoside 5'-triphosphate + H2O = a ribonucleoside 5'-phosphate + diphosphate + H(+). It carries out the reaction a 2'-deoxyribonucleoside 5'-triphosphate + H2O = a 2'-deoxyribonucleoside 5'-phosphate + diphosphate + H(+). The catalysed reaction is dUTP + H2O = dUMP + diphosphate + H(+). The enzyme catalyses dTTP + H2O = dTMP + diphosphate + H(+). It catalyses the reaction dCTP + H2O = dCMP + diphosphate + H(+). Its function is as follows. Catalyzes the hydrolysis of nucleoside triphosphates, with a preference for pyrimidine deoxynucleoside triphosphates (dUTP, dTTP and dCTP). The polypeptide is Nucleoside triphosphatase NudI (Escherichia fergusonii (strain ATCC 35469 / DSM 13698 / CCUG 18766 / IAM 14443 / JCM 21226 / LMG 7866 / NBRC 102419 / NCTC 12128 / CDC 0568-73)).